Reading from the N-terminus, the 317-residue chain is Protease HtpX homolog (317 aa).

Helical transmembrane passes span 14 to 34 (LMGI…LYYI) and 41 to 61 (IALL…QWLF). H146 contacts Zn(2+). The active site involves E147. H150 contributes to the Zn(2+) binding site. 2 helical membrane passes run 158 to 178 (MLLA…TLLF) and 189 to 209 (IVLL…LILA). A Zn(2+)-binding site is contributed by E215.

The protein belongs to the peptidase M48B family. Zn(2+) is required as a cofactor.

Its subcellular location is the cell membrane. The chain is Protease HtpX homolog from Thermoplasma acidophilum (strain ATCC 25905 / DSM 1728 / JCM 9062 / NBRC 15155 / AMRC-C165).